A 355-amino-acid chain; its full sequence is Holliday junction branch migration complex subunit RuvB (355 aa).

Residues 4-190 form a large ATPase domain (RuvB-L) region; the sequence is TDKLAAERII…FGIVARLEFY (187 aa). ATP is bound by residues Leu-29, Arg-30, Gly-71, Lys-74, Thr-75, Thr-76, 137–139, Arg-180, Tyr-190, and Arg-227; that span reads EDY. Thr-75 provides a ligand contact to Mg(2+). The tract at residues 191–261 is small ATPAse domain (RuvB-S); the sequence is DAEQLSRIVR…VADAALAMLD (71 aa). The interval 264 to 355 is head domain (RuvB-H); it reads PVGFDLMDRK…GSMWNTPDGA (92 aa). DNA is bound by residues Arg-300, Arg-319, and Arg-324.

Belongs to the RuvB family. In terms of assembly, homohexamer. Forms an RuvA(8)-RuvB(12)-Holliday junction (HJ) complex. HJ DNA is sandwiched between 2 RuvA tetramers; dsDNA enters through RuvA and exits via RuvB. An RuvB hexamer assembles on each DNA strand where it exits the tetramer. Each RuvB hexamer is contacted by two RuvA subunits (via domain III) on 2 adjacent RuvB subunits; this complex drives branch migration. In the full resolvosome a probable DNA-RuvA(4)-RuvB(12)-RuvC(2) complex forms which resolves the HJ.

The protein resides in the cytoplasm. The catalysed reaction is ATP + H2O = ADP + phosphate + H(+). Functionally, the RuvA-RuvB-RuvC complex processes Holliday junction (HJ) DNA during genetic recombination and DNA repair, while the RuvA-RuvB complex plays an important role in the rescue of blocked DNA replication forks via replication fork reversal (RFR). RuvA specifically binds to HJ cruciform DNA, conferring on it an open structure. The RuvB hexamer acts as an ATP-dependent pump, pulling dsDNA into and through the RuvAB complex. RuvB forms 2 homohexamers on either side of HJ DNA bound by 1 or 2 RuvA tetramers; 4 subunits per hexamer contact DNA at a time. Coordinated motions by a converter formed by DNA-disengaged RuvB subunits stimulates ATP hydrolysis and nucleotide exchange. Immobilization of the converter enables RuvB to convert the ATP-contained energy into a lever motion, pulling 2 nucleotides of DNA out of the RuvA tetramer per ATP hydrolyzed, thus driving DNA branch migration. The RuvB motors rotate together with the DNA substrate, which together with the progressing nucleotide cycle form the mechanistic basis for DNA recombination by continuous HJ branch migration. Branch migration allows RuvC to scan DNA until it finds its consensus sequence, where it cleaves and resolves cruciform DNA. In Burkholderia vietnamiensis (strain G4 / LMG 22486) (Burkholderia cepacia (strain R1808)), this protein is Holliday junction branch migration complex subunit RuvB.